The sequence spans 523 residues: Fidgetin-like protein 1 (523 aa).

Residues 114–154 (PVQQAVKSRPEGQFPESRNNSTKKIDAQQYSSESSSQSGFG) form a disordered region. A compositionally biased stretch (low complexity) spans 141 to 151 (QQYSSESSSQS). Residues alanine 253 and 293–298 (GTGKTL) contribute to the ATP site.

Belongs to the AAA ATPase family. In terms of assembly, hexamer. It depends on Mg(2+) as a cofactor.

The catalysed reaction is ATP + H2O = ADP + phosphate + H(+). This Drosophila melanogaster (Fruit fly) protein is Fidgetin-like protein 1.